The following is a 353-amino-acid chain: Phospho-N-acetylmuramoyl-pentapeptide-transferase (353 aa).

Helical transmembrane passes span 24–44 (LGFF…ILWA), 66–86 (TPTM…VLCA), 88–108 (LGNL…FVGF), 129–149 (FGML…KGLD), 160–180 (PLFE…FLST), 192–212 (GLAS…VYVA), 229–249 (VGEL…FLWY), 256–276 (VFMG…NAIV), 281–301 (ILLV…ILQV), and 330–350 (KVIV…LLSL).

The protein belongs to the glycosyltransferase 4 family. MraY subfamily. It depends on Mg(2+) as a cofactor.

The protein localises to the cell inner membrane. The catalysed reaction is UDP-N-acetyl-alpha-D-muramoyl-L-alanyl-gamma-D-glutamyl-meso-2,6-diaminopimeloyl-D-alanyl-D-alanine + di-trans,octa-cis-undecaprenyl phosphate = di-trans,octa-cis-undecaprenyl diphospho-N-acetyl-alpha-D-muramoyl-L-alanyl-D-glutamyl-meso-2,6-diaminopimeloyl-D-alanyl-D-alanine + UMP. Its pathway is cell wall biogenesis; peptidoglycan biosynthesis. Catalyzes the initial step of the lipid cycle reactions in the biosynthesis of the cell wall peptidoglycan: transfers peptidoglycan precursor phospho-MurNAc-pentapeptide from UDP-MurNAc-pentapeptide onto the lipid carrier undecaprenyl phosphate, yielding undecaprenyl-pyrophosphoryl-MurNAc-pentapeptide, known as lipid I. This Helicobacter pylori (strain ATCC 700392 / 26695) (Campylobacter pylori) protein is Phospho-N-acetylmuramoyl-pentapeptide-transferase.